We begin with the raw amino-acid sequence, 190 residues long: MAKSVPAIFLDRDGTINVDHGYVHEIDNFEFIDGVIDAMRELKKMGFALVVVTNQSGIARGKFTEAQFETLTEWMDWSLADRDVDLDGIYYCPHHPQGSVEEFRQVCDCRKPHPGMFLSARDYLHIDMAASYMVGDKLEDMQAAAAASVGTKVLVRTGKPITPEAENAADWVLNSLADLPQAIKKQQKPA.

Catalysis depends on Asp11, which acts as the Nucleophile. 2 residues coordinate Mg(2+): Asp11 and Asp13. Substrate contacts are provided by residues 11 to 13, 19 to 22, and 53 to 56; these read DRD, DHGY, and TNQS. The active-site Proton donor is the Asp13. Residues Cys92, His94, Cys107, and Cys109 each contribute to the Zn(2+) site. 110 to 111 is a substrate binding site; the sequence is RK. Asp136 and Lys137 together coordinate Mg(2+). Lys137 contributes to the substrate binding site.

Belongs to the GmhB family. In terms of assembly, monomer. The cofactor is Mg(2+). Requires Zn(2+) as cofactor.

Its subcellular location is the cytoplasm. It catalyses the reaction D-glycero-beta-D-manno-heptose 1,7-bisphosphate + H2O = D-glycero-beta-D-manno-heptose 1-phosphate + phosphate. It functions in the pathway nucleotide-sugar biosynthesis; ADP-L-glycero-beta-D-manno-heptose biosynthesis; ADP-L-glycero-beta-D-manno-heptose from D-glycero-beta-D-manno-heptose 7-phosphate: step 2/4. The protein operates within bacterial outer membrane biogenesis; LPS core biosynthesis. Converts the D-glycero-beta-D-manno-heptose 1,7-bisphosphate intermediate into D-glycero-beta-D-manno-heptose 1-phosphate by removing the phosphate group at the C-7 position. The polypeptide is D-glycero-beta-D-manno-heptose-1,7-bisphosphate 7-phosphatase (gmhB) (Escherichia coli O6:H1 (strain CFT073 / ATCC 700928 / UPEC)).